The following is a 55-amino-acid chain: Large ribosomal subunit protein bL33B (55 aa).

This sequence belongs to the bacterial ribosomal protein bL33 family.

The chain is Large ribosomal subunit protein bL33B from Mycolicibacterium paratuberculosis (strain ATCC BAA-968 / K-10) (Mycobacterium paratuberculosis).